The primary structure comprises 266 residues: 2-Cys peroxiredoxin BAS1, chloroplastic (266 aa).

The span at 1 to 16 (MASVASSTTLISSPSS) shows a compositional bias: low complexity. The interval 1 to 25 (MASVASSTTLISSPSSRVFPAKSSL) is disordered. Residues 1–65 (MASVASSTTL…SSTSRRSFAV (65 aa)) constitute a chloroplast transit peptide. The region spanning 73–232 (PLVGNKAPDF…TMRTLQALQY (160 aa)) is the Thioredoxin domain. Catalysis depends on Cys-119, which acts as the Cysteine sulfenic acid (-SOH) intermediate.

This sequence belongs to the peroxiredoxin family. AhpC/Prx1 subfamily. In terms of assembly, homodimer; disulfide-linked, upon oxidation. Interacts with the plastidial thioredoxin CDSP32. Interacts with the plastidial NADPH-dependent thioredoxin reductase ANTR-C.

The protein resides in the plastid. It is found in the chloroplast. The enzyme catalyses a hydroperoxide + [thioredoxin]-dithiol = an alcohol + [thioredoxin]-disulfide + H2O. Thiol-specific peroxidase that catalyzes the reduction of hydrogen peroxide and organic hydroperoxides to water and alcohols, respectively. Plays a role in cell protection against oxidative stress by detoxifying peroxides. May be an antioxidant enzyme particularly in the developing shoot and photosynthesizing leaf. This Arabidopsis thaliana (Mouse-ear cress) protein is 2-Cys peroxiredoxin BAS1, chloroplastic (BAS1).